The chain runs to 472 residues: Glutamate--tRNA ligase (472 aa).

The 'HIGH' region motif lies at 8–18 (PSPTGFLHIGS). The 'KMSKS' region motif lies at 239-243 (KLSKR). Lys242 contributes to the ATP binding site.

The protein belongs to the class-I aminoacyl-tRNA synthetase family. Glutamate--tRNA ligase type 1 subfamily. In terms of assembly, monomer.

The protein resides in the cytoplasm. It carries out the reaction tRNA(Glu) + L-glutamate + ATP = L-glutamyl-tRNA(Glu) + AMP + diphosphate. Functionally, catalyzes the attachment of glutamate to tRNA(Glu) in a two-step reaction: glutamate is first activated by ATP to form Glu-AMP and then transferred to the acceptor end of tRNA(Glu). This Solibacter usitatus (strain Ellin6076) protein is Glutamate--tRNA ligase.